A 129-amino-acid polypeptide reads, in one-letter code: UPF0102 protein Cpar_0015 (129 aa).

It belongs to the UPF0102 family.

The polypeptide is UPF0102 protein Cpar_0015 (Chlorobaculum parvum (strain DSM 263 / NCIMB 8327) (Chlorobium vibrioforme subsp. thiosulfatophilum)).